Here is a 483-residue protein sequence, read N- to C-terminus: Phloretin 2'-O-glucosyltransferase (483 aa).

H15 functions as the Proton acceptor in the catalytic mechanism. An anthocyanidin is bound at residue H15. D118 serves as the catalytic Charge relay. T140, A360, Q362, H377, W380, N381, S382, and E385 together coordinate UDP-alpha-D-glucose. Residue A400 coordinates an anthocyanidin. The UDP-alpha-D-glucose site is built by E401 and Q402.

Belongs to the UDP-glycosyltransferase family.

It carries out the reaction phloretin + UDP-alpha-D-glucose = phlorizin + UDP + H(+). Glycosyltransferase that possesses phloretin 2'-O-glycosyltransferase activity. Converts phloretin to phlorizin (phloretin 2'-O-glucoside), a potent antioxidant. Is specific for phloretin and does not possess glycosyltransferase activity toward naringenin, naringenin chalcone, eriodictyol, eriodictyol chalcone, apigenin, luteolin, kaempferol, quercetin, isoliquiritigenin, butein, caffeic acid, 2-coumaric acid, 3-coumaric acid, 3-hydroxybenzoic acid, 3,4-dihydroxybenzoic acid and 3,4-dihydroxyhydrocinnamic acid. Can glycosylate phloretin in the presence of UDP-glucose, UDP-xylose and UDP-galactose. This is Phloretin 2'-O-glucosyltransferase from Pyrus communis (Pear).